The following is a 202-amino-acid chain: N-(5'-phosphoribosyl)anthranilate isomerase (202 aa).

The protein belongs to the TrpF family.

It carries out the reaction N-(5-phospho-beta-D-ribosyl)anthranilate = 1-(2-carboxyphenylamino)-1-deoxy-D-ribulose 5-phosphate. It functions in the pathway amino-acid biosynthesis; L-tryptophan biosynthesis; L-tryptophan from chorismate: step 3/5. This is N-(5'-phosphoribosyl)anthranilate isomerase from Listeria monocytogenes serotype 4b (strain F2365).